The sequence spans 229 residues: Putative N-acetylmannosamine-6-phosphate 2-epimerase (229 aa).

Belongs to the NanE family.

It carries out the reaction an N-acyl-D-glucosamine 6-phosphate = an N-acyl-D-mannosamine 6-phosphate. Its pathway is amino-sugar metabolism; N-acetylneuraminate degradation; D-fructose 6-phosphate from N-acetylneuraminate: step 3/5. Its function is as follows. Converts N-acetylmannosamine-6-phosphate (ManNAc-6-P) to N-acetylglucosamine-6-phosphate (GlcNAc-6-P). The sequence is that of Putative N-acetylmannosamine-6-phosphate 2-epimerase from Escherichia coli O127:H6 (strain E2348/69 / EPEC).